The primary structure comprises 336 residues: Inositol 2-dehydrogenase (336 aa).

This sequence belongs to the Gfo/Idh/MocA family. As to quaternary structure, homotetramer.

The enzyme catalyses myo-inositol + NAD(+) = scyllo-inosose + NADH + H(+). Its function is as follows. Involved in the oxidation of myo-inositol (MI) to 2-keto-myo-inositol (2KMI or 2-inosose). This chain is Inositol 2-dehydrogenase, found in Pseudomonas fluorescens (strain SBW25).